The chain runs to 305 residues: Aspartate carbamoyltransferase catalytic subunit (305 aa).

Arginine 54 and threonine 55 together coordinate carbamoyl phosphate. Position 83 (lysine 83) interacts with L-aspartate. Carbamoyl phosphate-binding residues include arginine 104, histidine 132, and glutamine 135. Arginine 165 and arginine 226 together coordinate L-aspartate. Carbamoyl phosphate contacts are provided by leucine 265 and proline 266.

Belongs to the aspartate/ornithine carbamoyltransferase superfamily. ATCase family. In terms of assembly, heterooligomer of catalytic and regulatory chains.

The catalysed reaction is carbamoyl phosphate + L-aspartate = N-carbamoyl-L-aspartate + phosphate + H(+). Its pathway is pyrimidine metabolism; UMP biosynthesis via de novo pathway; (S)-dihydroorotate from bicarbonate: step 2/3. Its function is as follows. Catalyzes the condensation of carbamoyl phosphate and aspartate to form carbamoyl aspartate and inorganic phosphate, the committed step in the de novo pyrimidine nucleotide biosynthesis pathway. This chain is Aspartate carbamoyltransferase catalytic subunit, found in Pyrobaculum arsenaticum (strain DSM 13514 / JCM 11321 / PZ6).